A 339-amino-acid polypeptide reads, in one-letter code: Nicotinate-nucleotide--dimethylbenzimidazole phosphoribosyltransferase (339 aa).

Glu306 (proton acceptor) is an active-site residue.

This sequence belongs to the CobT family.

It catalyses the reaction 5,6-dimethylbenzimidazole + nicotinate beta-D-ribonucleotide = alpha-ribazole 5'-phosphate + nicotinate + H(+). It functions in the pathway nucleoside biosynthesis; alpha-ribazole biosynthesis; alpha-ribazole from 5,6-dimethylbenzimidazole: step 1/2. Catalyzes the synthesis of alpha-ribazole-5'-phosphate from nicotinate mononucleotide (NAMN) and 5,6-dimethylbenzimidazole (DMB). The chain is Nicotinate-nucleotide--dimethylbenzimidazole phosphoribosyltransferase from Brucella anthropi (strain ATCC 49188 / DSM 6882 / CCUG 24695 / JCM 21032 / LMG 3331 / NBRC 15819 / NCTC 12168 / Alc 37) (Ochrobactrum anthropi).